Consider the following 593-residue polypeptide: ATP-dependent RNA helicase MRH4, mitochondrial (593 aa).

The transit peptide at M1–A106 directs the protein to the mitochondrion. Positions G42 to G51 are enriched in low complexity. The interval G42 to K63 is disordered. Positions T52–K63 are enriched in polar residues. The short motif at V130–Q137 is the Q motif element. Residues I181 to I399 form the Helicase ATP-binding domain. A194 to T201 lines the ATP pocket. The DEAD box signature appears at D347–D350. Residues A433–G593 form the Helicase C-terminal domain.

This sequence belongs to the DEAD box helicase family. MRH4 subfamily.

Its subcellular location is the mitochondrion. The enzyme catalyses ATP + H2O = ADP + phosphate + H(+). Functionally, ATP-binding RNA helicase involved in mitochondrial RNA metabolism. Required for maintenance of mitochondrial DNA. In Scheffersomyces stipitis (strain ATCC 58785 / CBS 6054 / NBRC 10063 / NRRL Y-11545) (Yeast), this protein is ATP-dependent RNA helicase MRH4, mitochondrial (MRH4).